The sequence spans 355 residues: Probable dual-specificity RNA methyltransferase RlmN (355 aa).

The active-site Proton acceptor is the Glu-89. A Radical SAM core domain is found at 95 to 322 (YENRKTVCLS…KRLGVPTSIR (228 aa)). Cysteines 102 and 333 form a disulfide. [4Fe-4S] cluster is bound by residues Cys-109, Cys-113, and Cys-116. Residues 159 to 160 (GE), Ser-191, 214 to 216 (SLH), and Asn-290 each bind S-adenosyl-L-methionine. Catalysis depends on Cys-333, which acts as the S-methylcysteine intermediate.

Belongs to the radical SAM superfamily. RlmN family. [4Fe-4S] cluster serves as cofactor.

Its subcellular location is the cytoplasm. The catalysed reaction is adenosine(2503) in 23S rRNA + 2 reduced [2Fe-2S]-[ferredoxin] + 2 S-adenosyl-L-methionine = 2-methyladenosine(2503) in 23S rRNA + 5'-deoxyadenosine + L-methionine + 2 oxidized [2Fe-2S]-[ferredoxin] + S-adenosyl-L-homocysteine. It catalyses the reaction adenosine(37) in tRNA + 2 reduced [2Fe-2S]-[ferredoxin] + 2 S-adenosyl-L-methionine = 2-methyladenosine(37) in tRNA + 5'-deoxyadenosine + L-methionine + 2 oxidized [2Fe-2S]-[ferredoxin] + S-adenosyl-L-homocysteine. Its function is as follows. Specifically methylates position 2 of adenine 2503 in 23S rRNA and position 2 of adenine 37 in tRNAs. This Thermus thermophilus (strain ATCC 27634 / DSM 579 / HB8) protein is Probable dual-specificity RNA methyltransferase RlmN.